The sequence spans 346 residues: Holliday junction branch migration complex subunit RuvB (346 aa).

The segment at 1-181 (MSDRNPLIDA…FGIPVRLNFY (181 aa)) is large ATPase domain (RuvB-L). Residues Leu-20, Arg-21, Gly-62, Lys-65, Thr-66, Thr-67, 128-130 (EDF), Arg-171, Tyr-181, and Arg-218 each bind ATP. Residue Thr-66 participates in Mg(2+) binding. The tract at residues 182–252 (TVEELEYIVR…IADEALSRLE (71 aa)) is small ATPAse domain (RuvB-S). The tract at residues 255 to 346 (NRGLDQLDRR…SQYGLFMEDE (92 aa)) is head domain (RuvB-H). Residues Arg-291, Arg-310, and Arg-315 each coordinate DNA.

It belongs to the RuvB family. In terms of assembly, homohexamer. Forms an RuvA(8)-RuvB(12)-Holliday junction (HJ) complex. HJ DNA is sandwiched between 2 RuvA tetramers; dsDNA enters through RuvA and exits via RuvB. An RuvB hexamer assembles on each DNA strand where it exits the tetramer. Each RuvB hexamer is contacted by two RuvA subunits (via domain III) on 2 adjacent RuvB subunits; this complex drives branch migration. In the full resolvosome a probable DNA-RuvA(4)-RuvB(12)-RuvC(2) complex forms which resolves the HJ.

It localises to the cytoplasm. The catalysed reaction is ATP + H2O = ADP + phosphate + H(+). The RuvA-RuvB-RuvC complex processes Holliday junction (HJ) DNA during genetic recombination and DNA repair, while the RuvA-RuvB complex plays an important role in the rescue of blocked DNA replication forks via replication fork reversal (RFR). RuvA specifically binds to HJ cruciform DNA, conferring on it an open structure. The RuvB hexamer acts as an ATP-dependent pump, pulling dsDNA into and through the RuvAB complex. RuvB forms 2 homohexamers on either side of HJ DNA bound by 1 or 2 RuvA tetramers; 4 subunits per hexamer contact DNA at a time. Coordinated motions by a converter formed by DNA-disengaged RuvB subunits stimulates ATP hydrolysis and nucleotide exchange. Immobilization of the converter enables RuvB to convert the ATP-contained energy into a lever motion, pulling 2 nucleotides of DNA out of the RuvA tetramer per ATP hydrolyzed, thus driving DNA branch migration. The RuvB motors rotate together with the DNA substrate, which together with the progressing nucleotide cycle form the mechanistic basis for DNA recombination by continuous HJ branch migration. Branch migration allows RuvC to scan DNA until it finds its consensus sequence, where it cleaves and resolves cruciform DNA. In Brucella melitensis biotype 2 (strain ATCC 23457), this protein is Holliday junction branch migration complex subunit RuvB.